Consider the following 343-residue polypeptide: MPIATPEVYNEMLDRAKAGKFAYPAINVTSSQTLHAALRGFAEAESDGIVQISTGGAEFLGGQHNKDMVTGAVALAEFAHIVAEKYDVTVALHTDHCPKDKLDGYVRPLIAVSEERVKAGRNPLFQSHMWDGSAETLADNLSIAQELLARARAARIILEVEITPTGGEEDGVSHEINDSLYTTVDDAVRTVEALGLGEKGRYLLAASFGNVHGVYKPGNVVLRPELLKELNEGIASKYGQPAGSKPFDFVFHGGSGSTAEEIATALENGVVKMNIDTDTQYAFTRPVVDHMFRNYDGVLKVDGEVGNKKTYDPRTWGKLAEAGMAARVVEACGHLRSAGQKIK.

Residue Ser-53 participates in D-glyceraldehyde 3-phosphate binding. Asp-95 (proton donor) is an active-site residue. Zn(2+) is bound by residues His-96, Asp-131, Glu-161, and His-212. Gly-213 contacts dihydroxyacetone phosphate. His-252 provides a ligand contact to Zn(2+). Residues 253-255 and 274-277 contribute to the dihydroxyacetone phosphate site; these read GGS and NIDT.

The protein belongs to the class II fructose-bisphosphate aldolase family. Requires Zn(2+) as cofactor.

It catalyses the reaction beta-D-fructose 1,6-bisphosphate = D-glyceraldehyde 3-phosphate + dihydroxyacetone phosphate. It functions in the pathway carbohydrate degradation; glycolysis; D-glyceraldehyde 3-phosphate and glycerone phosphate from D-glucose: step 4/4. Catalyzes the aldol condensation of dihydroxyacetone phosphate (DHAP or glycerone-phosphate) with glyceraldehyde 3-phosphate (G3P) to form fructose 1,6-bisphosphate (FBP) in gluconeogenesis and the reverse reaction in glycolysis. The polypeptide is Fructose-bisphosphate aldolase (fba) (Streptomyces coelicolor (strain ATCC BAA-471 / A3(2) / M145)).